Here is a 260-residue protein sequence, read N- to C-terminus: Shikimate dehydrogenase (NADP(+)) (260 aa).

Residues 14-16 (SAS) and T60 contribute to the shikimate site. Residue K64 is the Proton acceptor of the active site. Residues N85 and D100 each contribute to the shikimate site. Residues 121-125 (GAGGA), 145-150 (NRTYER), and F201 contribute to the NADP(+) site. Shikimate is bound at residue Y203. NADP(+) is bound at residue G225.

This sequence belongs to the shikimate dehydrogenase family. As to quaternary structure, homodimer.

It carries out the reaction shikimate + NADP(+) = 3-dehydroshikimate + NADPH + H(+). Its pathway is metabolic intermediate biosynthesis; chorismate biosynthesis; chorismate from D-erythrose 4-phosphate and phosphoenolpyruvate: step 4/7. Its function is as follows. Involved in the biosynthesis of the chorismate, which leads to the biosynthesis of aromatic amino acids. Catalyzes the reversible NADPH linked reduction of 3-dehydroshikimate (DHSA) to yield shikimate (SA). The sequence is that of Shikimate dehydrogenase (NADP(+)) from Pyrobaculum neutrophilum (strain DSM 2338 / JCM 9278 / NBRC 100436 / V24Sta) (Thermoproteus neutrophilus).